A 995-amino-acid polypeptide reads, in one-letter code: Epididymis-specific alpha-mannosidase (995 aa).

The N-terminal stretch at 1–21 is a signal peptide; the sequence is MGPHSWLPLFMQLALLGPQWA. H36, D38, and D151 together coordinate Zn(2+). D151 (nucleophile) is an active-site residue. An N-linked (GlcNAc...) asparagine glycan is attached at N285. H411 is a binding site for Zn(2+). N593, N625, N657, N733, N793, N875, and N977 each carry an N-linked (GlcNAc...) asparagine glycan. Positions 956–977 are disordered; the sequence is TEDGHHHRGSSRRPLPPLRGPN.

Belongs to the glycosyl hydrolase 38 family. Requires Zn(2+) as cofactor. In terms of processing, processed into a 27 kDa fragment localized on the equatorial segment and the apical rim of the head of mature sperm. As to expression, specific to the caput and corpus of the epididymis.

The protein localises to the secreted. The enzyme catalyses Hydrolysis of terminal, non-reducing alpha-D-mannose residues in alpha-D-mannosides.. Functionally, can digest both p-nitro-phenyl-alpha-D-mannoside and high mannose oligosaccharide (Man(8)-GlcNAc(2)). May be involved in sperm maturation. Has a possible role in specific sperm-egg interaction since sperm surface mannosidase acts like a receptor for mannose-containing oligosaccharides located on the zona pellucida. In Sus scrofa (Pig), this protein is Epididymis-specific alpha-mannosidase (MAN2B2).